The sequence spans 681 residues: Minichromosome maintenance domain-containing protein 2 (681 aa).

S292 is modified (phosphoserine). Residues 533-621 (KQFTTEDFEK…LIAALLFEIS (89 aa)) form the MCM domain.

In terms of biological role, plays an important role in meiotic recombination and associated DNA double-strand break repair. The chain is Minichromosome maintenance domain-containing protein 2 (Mcmdc2) from Rattus norvegicus (Rat).